The following is a 606-amino-acid chain: Sporulation kinase A (606 aa).

Positions 3–73 (QDTQHVKPLQ…SYFYNEHHLM (71 aa)) constitute a PAS 1 domain. In terms of domain architecture, PAC 1 spans 77–116 (FRFIKKDHTIVWVEAAVEIVTTRAERTEREIILKMKVLEE). A PAS 2 domain is found at 140–214 (YITDDYERLV…IRMQKGMEVG (75 aa)). The 38-residue stretch at 218 to 255 (QTWKRLDGTPVHLEVKASPTVYKNQQAELLLLIDISSR) folds into the PAC 2 domain. The 71-residue stretch at 265-335 (SRERYQLLIQ…ERIQNIAEQK (71 aa)) folds into the PAS 3 domain. The Histidine kinase domain occupies 402–606 (GIAHEIRNPL…TAFKISFPKK (205 aa)). His-405 carries the phosphohistidine; by autocatalysis modification.

The enzyme catalyses ATP + protein L-histidine = ADP + protein N-phospho-L-histidine.. Functionally, phosphorylates the sporulation-regulatory proteins spo0A and spo0F. It also autophosphorylates in the presence of ATP. This Bacillus subtilis (strain 168) protein is Sporulation kinase A (kinA).